The sequence spans 324 residues: Methenyltetrahydromethanopterin cyclohydrolase (324 aa).

Belongs to the MCH family.

The protein resides in the cytoplasm. The enzyme catalyses 5,10-methenyl-5,6,7,8-tetrahydromethanopterin + H2O = N(5)-formyl-5,6,7,8-tetrahydromethanopterin + H(+). It functions in the pathway one-carbon metabolism; formaldehyde degradation; formate from formaldehyde (H(4)MPT route): step 3/5. Its function is as follows. Catalyzes the hydrolysis of methenyl-H(4)MPT(+) to 5-formyl-H(4)MPT. The polypeptide is Methenyltetrahydromethanopterin cyclohydrolase (Methylobacterium sp. (strain 4-46)).